Here is a 209-residue protein sequence, read N- to C-terminus: Glycolipid transfer protein A (209 aa).

2 consecutive repeat copies span residues 45-55 and 56-66. Residues 45 to 66 are 2 X 12 AA approximate tandem repeats; that stretch reads IKADITGNITKIRSVYESNPTK. 48–55 contributes to the beta-D-galactosyl-(1-&gt;4)-beta-D-glucosyl-(1&lt;-&gt;1)-N-[(9Z)-octadecenoyl]-sphing-4-enine binding site; the sequence is DITGNITK. Positions 140 and 207 each coordinate beta-D-galactosyl-(1-&gt;4)-beta-D-glucosyl-(1&lt;-&gt;1)-N-[(9Z)-octadecenoyl]-sphing-4-enine.

The protein belongs to the GLTP family.

The protein resides in the cytoplasm. Its function is as follows. Accelerates the intermembrane transfer of various glycolipids. Catalyzes the transfer of various glycosphingolipids between membranes but does not catalyze the transfer of phospholipids. May be involved in the intracellular translocation of glucosylceramides. This is Glycolipid transfer protein A (gltp-a) from Xenopus laevis (African clawed frog).